Reading from the N-terminus, the 387-residue chain is G2/mitotic-specific cyclin-B2 (387 aa).

Belongs to the cyclin family. Cyclin AB subfamily. In terms of assembly, interacts with the CDK1 protein kinase to form a serine/threonine kinase holoenzyme complex also known as maturation promoting factor (MPF). The cyclin subunit imparts substrate specificity to the complex.

Essential for the control of the cell cycle at the G2/M (mitosis) transition. This chain is G2/mitotic-specific cyclin-B2 (ccnb2), found in Oryzias latipes (Japanese rice fish).